A 340-amino-acid polypeptide reads, in one-letter code: Serine/threonine-protein kinase PDIK1L (340 aa).

One can recognise a Protein kinase domain in the interval 8–333; the sequence is YDLIREVGRG…LELRLVQIAF (326 aa). Residues 14 to 22 and Lys-37 each bind ATP; that span reads VGRGSYGVV. The active-site Proton acceptor is Asp-164.

The protein belongs to the protein kinase superfamily. Ser/Thr protein kinase family.

It localises to the nucleus. The enzyme catalyses L-seryl-[protein] + ATP = O-phospho-L-seryl-[protein] + ADP + H(+). The catalysed reaction is L-threonyl-[protein] + ATP = O-phospho-L-threonyl-[protein] + ADP + H(+). This is Serine/threonine-protein kinase PDIK1L (PDIK1L) from Pongo abelii (Sumatran orangutan).